The chain runs to 84 residues: Small ribosomal subunit protein bS18A (84 aa).

Belongs to the bacterial ribosomal protein bS18 family. In terms of assembly, part of the 30S ribosomal subunit. Forms a tight heterodimer with protein bS6.

Functionally, binds as a heterodimer with protein bS6 to the central domain of the 16S rRNA, where it helps stabilize the platform of the 30S subunit. This chain is Small ribosomal subunit protein bS18A, found in Mycobacterium marinum (strain ATCC BAA-535 / M).